Consider the following 715-residue polypeptide: Polyribonucleotide nucleotidyltransferase (715 aa).

Residues Asp-497 and Asp-503 each coordinate Mg(2+). Positions 564–623 (PRLLTMKIDPEQIGLVIGPGGKTIKSITEQTGSKIDIADDGTVTIAAIQAKKAERARDLI) constitute a KH domain. Residues 633–701 (GEVYLGRVTR…NKGRLNLTRL (69 aa)) enclose the S1 motif domain.

The protein belongs to the polyribonucleotide nucleotidyltransferase family. Mg(2+) serves as cofactor.

The protein localises to the cytoplasm. The enzyme catalyses RNA(n+1) + phosphate = RNA(n) + a ribonucleoside 5'-diphosphate. Functionally, involved in mRNA degradation. Catalyzes the phosphorolysis of single-stranded polyribonucleotides processively in the 3'- to 5'-direction. The chain is Polyribonucleotide nucleotidyltransferase from Crocosphaera subtropica (strain ATCC 51142 / BH68) (Cyanothece sp. (strain ATCC 51142)).